Reading from the N-terminus, the 106-residue chain is UPF0145 protein VV2_1464 (106 aa).

This sequence belongs to the UPF0145 family.

The polypeptide is UPF0145 protein VV2_1464 (Vibrio vulnificus (strain CMCP6)).